The chain runs to 362 residues: MKTLHVDLGDRSYPIFIGAGLLANPEKFLPYLAAKQVLVVTNTTIDALYGDSFFSLFEGMDKAHKVVLPDGESYKNLEALNQIFDALLEGKHNRKTTLVALGGGVVGDMTGFAAAAYQRGVGFIQVPTTLLSQVDSSVGGKTGVNHPLGKNMIGAFHQPNVVVIDTDVLKTLPDRELSAGMAEVIKYGLIADYEFFCWLESNVKALMARDVDALEYAIERSCQIKADVVAQDETESGIRAILNLGHTFGHAIESDQGYGNWLHGEAVGAGMVMACELSCRMGWIDKPFCERAVALIAAAGLPIAPPESMSPEDFMKYMAVDKKVLDGGLRLVLPNKPGSSIVTDSFDADALAATLGRTGQLG.

Residues 70–75 (DGESYK), 104–108 (GVVGD), 128–129 (TT), lysine 141, and lysine 150 each bind NAD(+). Zn(2+) is bound by residues glutamate 183, histidine 246, and histidine 263.

The protein belongs to the sugar phosphate cyclases superfamily. Dehydroquinate synthase family. It depends on Co(2+) as a cofactor. Zn(2+) serves as cofactor. Requires NAD(+) as cofactor.

Its subcellular location is the cytoplasm. It catalyses the reaction 7-phospho-2-dehydro-3-deoxy-D-arabino-heptonate = 3-dehydroquinate + phosphate. Its pathway is metabolic intermediate biosynthesis; chorismate biosynthesis; chorismate from D-erythrose 4-phosphate and phosphoenolpyruvate: step 2/7. Its function is as follows. Catalyzes the conversion of 3-deoxy-D-arabino-heptulosonate 7-phosphate (DAHP) to dehydroquinate (DHQ). This chain is 3-dehydroquinate synthase, found in Saccharophagus degradans (strain 2-40 / ATCC 43961 / DSM 17024).